Here is a 229-residue protein sequence, read N- to C-terminus: Large ribosomal subunit protein uL1 (229 aa).

It belongs to the universal ribosomal protein uL1 family. Part of the 50S ribosomal subunit.

Functionally, binds directly to 23S rRNA. The L1 stalk is quite mobile in the ribosome, and is involved in E site tRNA release. In terms of biological role, protein L1 is also a translational repressor protein, it controls the translation of the L11 operon by binding to its mRNA. This chain is Large ribosomal subunit protein uL1, found in Chlorobium chlorochromatii (strain CaD3).